Here is a 182-residue protein sequence, read N- to C-terminus: Protein YIPF6 homolog (182 aa).

Residues 1 to 45 (MIESENPNTLDEPVIQTILRDLKMIGFKLYHVILPRGNAANVLRD) are Cytoplasmic-facing. A helical membrane pass occupies residues 46 to 66 (WDLWGPLILCLVMAIFLSISA). Topologically, residues 67 to 70 (EEQK) are lumenal. A helical transmembrane segment spans residues 71 to 91 (ALEFTIVFVVVWCGAAIVTVN). At 92 to 104 (GQLLCGNISFFQS) the chain is on the cytoplasmic side. A helical transmembrane segment spans residues 105–125 (VCILGYCIFPLTIATIIIWII). The Lumenal segment spans residues 126–133 (QNFTMIVK). Residues 134–154 (LPIVGGAWFWSSFASYGFLGS) form a helical membrane-spanning segment. Topologically, residues 155-161 (SVPESRR) are cytoplasmic. The chain crosses the membrane as a helical span at residues 162–182 (LLAVYPVLLFYLVIAWLVVVQ).

This sequence belongs to the YIP1 family.

It localises to the golgi apparatus membrane. In Dictyostelium discoideum (Social amoeba), this protein is Protein YIPF6 homolog (yipf6).